The primary structure comprises 109 residues: SRA stem-loop-interacting RNA-binding protein, mitochondrial (109 aa).

Ser15 is modified (phosphoserine). The RRM domain maps to 19–103 (PVAFVRRIPW…RRPKLPQTSD (85 aa)). Thr101 carries the phosphothreonine modification. Residue Ser102 is modified to Phosphoserine.

As to expression, ubiquitously expressed, with highest level in heart, liver, skeletal muscle and testis.

It is found in the mitochondrion. The protein localises to the nucleus. Functionally, RNA-binding protein that acts as a nuclear receptor corepressor. Probably acts by binding the SRA RNA, and repressing the SRA-mediated nuclear receptor coactivation. Binds the STR7 loop of SRA RNA. Also able to repress glucocorticoid (GR), androgen (AR), thyroid (TR) and VDR-mediated transactivation. This chain is SRA stem-loop-interacting RNA-binding protein, mitochondrial (SLIRP), found in Homo sapiens (Human).